Consider the following 505-residue polypeptide: Pentatricopeptide repeat-containing protein At2g17033 (505 aa).

PPR repeat units lie at residues 243–277 (KTQA…KIKP), 278–312 (GLFE…GHKI), and 313–347 (DTVC…NVPF). Residues 413–503 (LDLHGMHLSS…AKGKTVKEWL (91 aa)) form the Smr domain.

The protein belongs to the PPR family. P subfamily.

In Arabidopsis thaliana (Mouse-ear cress), this protein is Pentatricopeptide repeat-containing protein At2g17033.